Reading from the N-terminus, the 126-residue chain is Spermidine export protein MdtJ (126 aa).

The next 4 membrane-spanning stretches (helical) occupy residues 1–21 (MIYWIFLALAITAEVIGTLSM), 30–50 (ITGHIVMYIMITASYILLSLA), 54–74 (VALGVAYALWEGIGILFITLF), and 81–101 (EPFSLTKLAGLAILVIGIVML).

It belongs to the drug/metabolite transporter (DMT) superfamily. Small multidrug resistance (SMR) (TC 2.A.7.1) family. MdtJ subfamily. In terms of assembly, forms a complex with MdtI.

The protein resides in the cell inner membrane. In terms of biological role, catalyzes the excretion of spermidine. This is Spermidine export protein MdtJ from Sodalis glossinidius (strain morsitans).